The following is a 351-amino-acid chain: Phosphoribosylformylglycinamidine cyclo-ligase (351 aa).

This sequence belongs to the AIR synthase family.

It is found in the cytoplasm. The catalysed reaction is 2-formamido-N(1)-(5-O-phospho-beta-D-ribosyl)acetamidine + ATP = 5-amino-1-(5-phospho-beta-D-ribosyl)imidazole + ADP + phosphate + H(+). Its pathway is purine metabolism; IMP biosynthesis via de novo pathway; 5-amino-1-(5-phospho-D-ribosyl)imidazole from N(2)-formyl-N(1)-(5-phospho-D-ribosyl)glycinamide: step 2/2. This is Phosphoribosylformylglycinamidine cyclo-ligase from Burkholderia ambifaria (strain ATCC BAA-244 / DSM 16087 / CCUG 44356 / LMG 19182 / AMMD) (Burkholderia cepacia (strain AMMD)).